A 522-amino-acid polypeptide reads, in one-letter code: ATP synthase subunit alpha (522 aa).

ATP is bound at residue 176-183 (GDRQTGKT).

It belongs to the ATPase alpha/beta chains family. As to quaternary structure, F-type ATPases have 2 components, CF(1) - the catalytic core - and CF(0) - the membrane proton channel. CF(1) has five subunits: alpha(3), beta(3), gamma(1), delta(1), epsilon(1). CF(0) has four main subunits: a, b, b' and c.

Its subcellular location is the cell membrane. It carries out the reaction ATP + H2O + 4 H(+)(in) = ADP + phosphate + 5 H(+)(out). Its function is as follows. Produces ATP from ADP in the presence of a proton gradient across the membrane. The alpha chain is a regulatory subunit. The sequence is that of ATP synthase subunit alpha from Chloroflexus aggregans (strain MD-66 / DSM 9485).